We begin with the raw amino-acid sequence, 572 residues long: Proline--tRNA ligase (572 aa).

Belongs to the class-II aminoacyl-tRNA synthetase family. ProS type 1 subfamily. As to quaternary structure, homodimer.

It is found in the cytoplasm. The catalysed reaction is tRNA(Pro) + L-proline + ATP = L-prolyl-tRNA(Pro) + AMP + diphosphate. Catalyzes the attachment of proline to tRNA(Pro) in a two-step reaction: proline is first activated by ATP to form Pro-AMP and then transferred to the acceptor end of tRNA(Pro). As ProRS can inadvertently accommodate and process non-cognate amino acids such as alanine and cysteine, to avoid such errors it has two additional distinct editing activities against alanine. One activity is designated as 'pretransfer' editing and involves the tRNA(Pro)-independent hydrolysis of activated Ala-AMP. The other activity is designated 'posttransfer' editing and involves deacylation of mischarged Ala-tRNA(Pro). The misacylated Cys-tRNA(Pro) is not edited by ProRS. The sequence is that of Proline--tRNA ligase from Cronobacter sakazakii (strain ATCC BAA-894) (Enterobacter sakazakii).